Reading from the N-terminus, the 685-residue chain is Delta-like protein 4 (685 aa).

A signal peptide spans 1–26 (MAAASRSASGWALLLLVALWQQRAAG). At 27 to 529 (SGVFQLQLQE…PVGLPPSFPW (503 aa)) the chain is on the extracellular side. Disulfide bonds link C50–C54 and C61–C74. N-linked (GlcNAc...) asparagine glycosylation is found at N108 and N183. In terms of domain architecture, DSL spans 173–217 (VICSDNYYGDNCSRLCKKRNDHFGHYVCQPDGNLSCLPGWTGEYC). The cysteines at positions 175 and 184 are disulfide-linked. 2 interaction with Notch1 regions span residues 185-187 (SRL) and 191-195 (RNDHF). An intrachain disulfide couples C188 to C200. N205 carries an N-linked (GlcNAc...) asparagine glycan. 25 cysteine pairs are disulfide-bonded: C208-C217, C222-C233, C226-C239, C241-C250, C253-C264, C259-C270, C272-C281, C288-C300, C294-C310, C312-C321, C328-C339, C333-C348, C350-C359, C366-C377, C371-C388, C390-C399, C406-C417, C411-C426, C428-C437, C444-C455, C449-C464, C466-C475, C484-C495, C489-C506, and C508-C517. EGF-like domains lie at 218–251 (QQPI…RLCN), 252–282 (ECIP…LFCD), 284–322 (DLNY…VDCE), 324–360 (ELSE…LHCE), 362–400 (STLS…SNCE), 402–438 (KVDR…TYCE), 440–476 (HVSD…RRCE), and 480–518 (SIDA…SRCE). The N-linked (GlcNAc...) asparagine glycan is linked to N393. A helical membrane pass occupies residues 530–550 (VAVSLGVGLAVLLVLLGMVAV). Topologically, residues 551 to 685 (AVRQLRLRRP…RNECVIATEV (135 aa)) are cytoplasmic.

As to quaternary structure, interacts with NOTCH4. Interacts (via N-terminal DSL and MNNL domains) with NOTCH1 (via EGF-like domains). In terms of tissue distribution, expressed in vascular endothelium.

The protein localises to the cell membrane. Its function is as follows. Involved in the Notch signaling pathway as Notch ligand. Activates NOTCH1 and NOTCH4. Involved in angiogenesis; negatively regulates endothelial cell proliferation and migration and angiogenic sprouting. Essential for retinal progenitor proliferation. Required for suppressing rod fates in late retinal progenitors as well as for proper generation of other retinal cell types. During spinal cord neurogenesis, inhibits V2a interneuron fate. This Homo sapiens (Human) protein is Delta-like protein 4 (DLL4).